The sequence spans 295 residues: Pyridoxal 5'-phosphate synthase subunit PdxS (295 aa).

Position 25 (Asp-25) interacts with D-ribose 5-phosphate. The Schiff-base intermediate with D-ribose 5-phosphate role is filled by Lys-82. Residue Gly-154 coordinates D-ribose 5-phosphate. Arg-166 contacts D-glyceraldehyde 3-phosphate. D-ribose 5-phosphate contacts are provided by residues Gly-215 and 236-237; that span reads GS.

Belongs to the PdxS/SNZ family. In the presence of PdxT, forms a dodecamer of heterodimers.

The catalysed reaction is aldehydo-D-ribose 5-phosphate + D-glyceraldehyde 3-phosphate + L-glutamine = pyridoxal 5'-phosphate + L-glutamate + phosphate + 3 H2O + H(+). Its pathway is cofactor biosynthesis; pyridoxal 5'-phosphate biosynthesis. In terms of biological role, catalyzes the formation of pyridoxal 5'-phosphate from ribose 5-phosphate (RBP), glyceraldehyde 3-phosphate (G3P) and ammonia. The ammonia is provided by the PdxT subunit. Can also use ribulose 5-phosphate and dihydroxyacetone phosphate as substrates, resulting from enzyme-catalyzed isomerization of RBP and G3P, respectively. The sequence is that of Pyridoxal 5'-phosphate synthase subunit PdxS from Listeria monocytogenes serotype 4b (strain CLIP80459).